The chain runs to 352 residues: MDLMEKNLELVEIQKLEGHTDRVWSVAWNPVSSHADGVSPILASCSGDNTVRIWEQSSLSRSWTCKTVLEETHTRTVRSCAWSPSGQLLATASFDGTTGIWKNYGSEFECISTLEGHENEVKSVSWNASGSCLATCSRDKSVWIWEVLEGNEYDCAAVLTGHTQDVKMVQWHPTMDVLFSCSYDNTIKVWWSEDDDGEYQCVQTLGESNNGHSSTVWSISFNAAGDKMVTCSDDLTLKIWGTDIAKMQSGEEYAPWIHLCTLSGYHDRTIYSAHWSRDDIIASGAGDNAIRLFVDSKHDSVDGPSYNLLLKKNKAHENDVNSVQWSPGEGNRLLASASDDGMVKIWQLATKP.

7 WD repeats span residues 18 to 64 (GHTD…RSWT), 72 to 111 (THTRTVRSCAWSPSGQLLATASFDGTTGIWKNYGSEFECI), 116 to 155 (GHENEVKSVSWNASGSCLATCSRDKSVWIWEVLEGNEYDC), 161 to 200 (GHTQDVKMVQWHPTMDVLFSCSYDNTIKVWWSEDDDGEYQ), 211 to 250 (GHSSTVWSISFNAAGDKMVTCSDDLTLKIWGTDIAKMQSG), 265 to 303 (YHDRTIYSAHWSRDDIIASGAGDNAIRLFVDSKHDSVDG), and 315 to 352 (AHENDVNSVQWSPGEGNRLLASASDDGMVKIWQLATKP).

This sequence belongs to the WD repeat CIA1 family. Part of a complex composed of AE7, CIA1, MMS19 and NAR1. Interacts with AE7 and NAR1.

It localises to the nucleus. Its subcellular location is the cytoplasm. Functionally, essential component of the cytosolic iron-sulfur (Fe-S) protein assembly (CIA) machinery. Required for the maturation of extramitochondrial Fe/S proteins. In Arabidopsis thaliana (Mouse-ear cress), this protein is Protein CIA1.